The primary structure comprises 431 residues: Histidine--tRNA ligase (431 aa).

The protein belongs to the class-II aminoacyl-tRNA synthetase family. As to quaternary structure, homodimer.

The protein resides in the cytoplasm. It catalyses the reaction tRNA(His) + L-histidine + ATP = L-histidyl-tRNA(His) + AMP + diphosphate + H(+). In Neisseria meningitidis serogroup C (strain 053442), this protein is Histidine--tRNA ligase.